We begin with the raw amino-acid sequence, 147 residues long: Large ribosomal subunit protein uL13 (147 aa).

The protein belongs to the universal ribosomal protein uL13 family. In terms of assembly, part of the 50S ribosomal subunit.

In terms of biological role, this protein is one of the early assembly proteins of the 50S ribosomal subunit, although it is not seen to bind rRNA by itself. It is important during the early stages of 50S assembly. The protein is Large ribosomal subunit protein uL13 of Lactiplantibacillus plantarum (strain ATCC BAA-793 / NCIMB 8826 / WCFS1) (Lactobacillus plantarum).